The primary structure comprises 150 residues: Troponin C, isoform 2A (150 aa).

Met1 is modified (N-acetylmethionine). EF-hand domains follow at residues 7-42 (EQIG…MGVK), 43-78 (ISEK…FLIE), 83-118 (ALKT…LDNR), and 119-150 (LTEE…MMNG). The Ca(2+) site is built by Asp56, Asp58, Ser60, Glu62, and Glu67. 5 residues coordinate Ca(2+): Asp132, Asp134, Ser136, Thr138, and Glu143.

This sequence belongs to the troponin C family.

Troponin is the central regulatory protein of striated muscle contraction. Tn consists of three components: Tn-I which is the inhibitor of actomyosin ATPase, Tn-T which contains the binding site for tropomyosin and Tn-C. The binding of calcium to Tn-C abolishes the inhibitory action of Tn on actin filaments. The polypeptide is Troponin C, isoform 2A (Homarus americanus (American lobster)).